A 749-amino-acid polypeptide reads, in one-letter code: Cytosolic phospholipase A2 (749 aa).

The segment at 1 to 178 (MSFIDPYQHI…MKKLLGPKNS (178 aa)) is phospholipid binding. Serine 2 is modified (phosphoserine). The region spanning 6 to 122 (PYQHIIVEHQ…KVGEKKEVPF (117 aa)) is the C2 domain. The Ca(2+) site is built by aspartate 40, threonine 41, aspartate 43, asparagine 65, aspartate 93, alanine 94, and asparagine 95. A PLA2c domain is found at 140–740 (SCPDLRFSMA…SNVEARRFFN (601 aa)). The active-site Nucleophile is the serine 228. Threonine 268 carries the post-translational modification Phosphothreonine. Positions 409-457 (GSQSRGSTMEEELENITTKHIVSNDSSDSDDESHEPKGTENEDAGSDYQ) are disordered. A phosphoserine mark is found at serine 434, serine 435, and serine 437. Position 505 is a phosphoserine; by MAPK (serine 505). Residue serine 515 is modified to Phosphoserine. A Glycyl lysine isopeptide (Lys-Gly) (interchain with G-Cter in SUMO2) cross-link involves residue lysine 541. Aspartate 549 functions as the Proton acceptor in the catalytic mechanism. Lysine 606 participates in a covalent cross-link: Glycyl lysine isopeptide (Lys-Gly) (interchain with G-Cter in SUMO2). Serine 727 and serine 729 each carry phosphoserine.

As to quaternary structure, interacts with KAT5. Post-translationally, phosphorylated at both Ser-505 and Ser-727 in response to mitogenic stimuli.

The protein resides in the cytoplasm. It localises to the golgi apparatus membrane. The protein localises to the nucleus envelope. It carries out the reaction a 1,2-diacyl-sn-glycero-3-phosphocholine + H2O = a 1-acyl-sn-glycero-3-phosphocholine + a fatty acid + H(+). The catalysed reaction is a 1-O-alkyl-2-acyl-sn-glycero-3-phosphocholine + H2O = a 1-O-alkyl-sn-glycero-3-phosphocholine + a fatty acid + H(+). It catalyses the reaction a 1-acyl-sn-glycero-3-phosphocholine + H2O = sn-glycerol 3-phosphocholine + a fatty acid + H(+). The enzyme catalyses 1-hexadecanoyl-2-(5Z,8Z,11Z,14Z-eicosatetraenoyl)-sn-glycero-3-phosphocholine + H2O = 1-hexadecanoyl-sn-glycero-3-phosphocholine + (5Z,8Z,11Z,14Z)-eicosatetraenoate + H(+). It carries out the reaction 1,2-di-(5Z,8Z,11Z,14Z-eicosatetraenoyl)-sn-glycero-3-phosphocholine + H2O = 1-(5Z,8Z,11Z,14Z-eicosatetraenoyl)-sn-glycero-3-phosphocholine + (5Z,8Z,11Z,14Z)-eicosatetraenoate + H(+). The catalysed reaction is 1-octadecanoyl-2-(5Z,8Z,11Z,14Z-eicosatetraenoyl)-sn-glycero-3-phosphocholine + H2O = 1-octadecanoyl-sn-glycero-3-phosphocholine + (5Z,8Z,11Z,14Z)-eicosatetraenoate + H(+). It catalyses the reaction 1-hexadecanoyl-2-(9Z,12Z-octadecadienoyl)-sn-glycero-3-phosphocholine + H2O = (9Z,12Z)-octadecadienoate + 1-hexadecanoyl-sn-glycero-3-phosphocholine + H(+). The enzyme catalyses 1-octadecanoyl-2-(9Z,12Z,15Z-octadecatrienoyl)-sn-glycero-3-phosphocholine + H2O = (9Z,12Z,15Z)-octadecatrienoate + 1-octadecanoyl-sn-glycero-3-phosphocholine + H(+). It carries out the reaction 1-(5Z,8Z,11Z,14Z-eicosatetraenoyl)-2-hexadecanoyl-sn-glycero-3-phosphocholine + H2O = 1-(5Z,8Z,11Z,14Z-eicosatetraenoyl)-sn-glycero-3-phosphocholine + hexadecanoate + H(+). The catalysed reaction is 1-O-hexadecyl-2-(5Z,8Z,11Z,14Z)-eicosatetraenoyl-sn-glycero-3-phosphocholine + H2O = 1-O-hexadecyl-sn-glycero-3-phosphocholine + (5Z,8Z,11Z,14Z)-eicosatetraenoate + H(+). It catalyses the reaction 1,2-di-(9Z-octadecenoyl)-sn-glycero-3-phospho-(1'-sn-glycerol) + H2O = 1-(9Z-octadecenoyl)-sn-glycero-3-phospho-(1'-sn-glycerol) + (9Z)-octadecenoate + H(+). The enzyme catalyses 1-octadecanoyl-2-(5Z,8Z,11Z,14Z-eicosatetraenoyl)-sn-glycero-3-phosphate + H2O = 1-octadecanoyl-sn-glycero-3-phosphate + (5Z,8Z,11Z,14Z)-eicosatetraenoate + H(+). It carries out the reaction 1-hexadecanoyl-sn-glycero-3-phosphocholine + H2O = sn-glycerol 3-phosphocholine + hexadecanoate + H(+). The catalysed reaction is 2-(prostaglandin E2)-sn-glycero-3-phosphoethanolamine + H2O = sn-glycero-3-phosphoethanolamine + prostaglandin E2 + H(+). It catalyses the reaction 2-[(15S)-hydroxy-(5Z,8Z,11Z,13E)-eicosatetraenoyl]-sn-glycero-3-phosphocholine + H2O = (15S)-hydroxy-(5Z,8Z,11Z,13E)-eicosatetraenoate + sn-glycerol 3-phosphocholine + H(+). The enzyme catalyses 2-[(15R)-hydroxy-(5Z,8Z,11Z,13E)-eicosatetraenoyl]-sn-glycero-3-phosphocholine + H2O = (15R)-hydroxy-(5Z,8Z,11Z,13E)-eicosatetraenoate + sn-glycerol 3-phosphocholine + H(+). It carries out the reaction 2-(prostaglandin E2)-sn-glycero-3-phosphocholine + H2O = prostaglandin E2 + sn-glycerol 3-phosphocholine + H(+). The catalysed reaction is 2-[(11R)-hydroxy-(5Z,8Z,12E,14Z)-eicosatetraenoyl]-sn-glycero-3-phosphocholine + H2O = (11R)-hydroxy-(5Z,8Z,12E,14Z)-eicosatetraenoate + sn-glycerol 3-phosphocholine + H(+). It catalyses the reaction 1-(5Z,8Z,11Z,14Z-eicosatetraenoyl)-2-O-hexadecyl-sn-glycero-3-phosphocholine + H2O = 2-O-hexadecyl-sn-glycero-3-phosphocholine + (5Z,8Z,11Z,14Z)-eicosatetraenoate + H(+). The enzyme catalyses 1-octadecanoyl-2-(5Z,8Z,11Z,14Z-eicosatetraenoyl)-sn-glycero-3-phosphocholine + glycerol = 1-(5Z,8Z,11Z,14Z-eicosatetraenoyl)-glycerol + 1-octadecanoyl-sn-glycero-3-phosphocholine. It carries out the reaction 1-octadecanoyl-2-(9Z,12Z,15Z-octadecatrienoyl)-sn-glycero-3-phosphocholine + glycerol = 1-(9Z,12Z,15Z-octadecatrienoyl)-glycerol + 1-octadecanoyl-sn-glycero-3-phosphocholine. It functions in the pathway membrane lipid metabolism; glycerophospholipid metabolism. Its pathway is lipid metabolism; arachidonate metabolism. The protein operates within lipid metabolism; prostaglandin biosynthesis. It participates in lipid metabolism; leukotriene B4 biosynthesis. With respect to regulation, activated by cytosolic calcium, which is necessary for binding to membrane lipids. Activated by phosphorylation in response to mitogenic stimuli. Its function is as follows. Has primarily calcium-dependent phospholipase and lysophospholipase activities, with a major role in membrane lipid remodeling and biosynthesis of lipid mediators of the inflammatory response. Plays an important role in embryo implantation and parturition through its ability to trigger prostanoid production. Preferentially hydrolyzes the ester bond of the fatty acyl group attached at sn-2 position of phospholipids (phospholipase A2 activity). Selectively hydrolyzes sn-2 arachidonoyl group from membrane phospholipids, providing the precursor for eicosanoid biosynthesis via the cyclooxygenase pathway. In an alternative pathway of eicosanoid biosynthesis, hydrolyzes sn-2 fatty acyl chain of eicosanoid lysophopholipids to release free bioactive eicosanoids. Hydrolyzes the ester bond of the fatty acyl group attached at sn-1 position of phospholipids (phospholipase A1 activity) only if an ether linkage rather than an ester linkage is present at the sn-2 position. This hydrolysis is not stereospecific. Has calcium-independent phospholipase A2 and lysophospholipase activities in the presence of phosphoinositides. Has O-acyltransferase activity. Catalyzes the transfer of fatty acyl chains from phospholipids to a primary hydroxyl group of glycerol (sn-1 or sn-3), potentially contributing to monoacylglycerol synthesis. This chain is Cytosolic phospholipase A2 (PLA2G4A), found in Pongo abelii (Sumatran orangutan).